The sequence spans 287 residues: Nucleotide-binding protein VP2673 (287 aa).

8 to 15 is a binding site for ATP; sequence GHSGAGKS. Residue 56 to 59 coordinates GTP; sequence DIRN.

The protein belongs to the RapZ-like family.

Functionally, displays ATPase and GTPase activities. The protein is Nucleotide-binding protein VP2673 of Vibrio parahaemolyticus serotype O3:K6 (strain RIMD 2210633).